An 845-amino-acid polypeptide reads, in one-letter code: MWGASDKKYKSNQFRAMFFKNATFIKRQKCSLCVQISIPLILVIILVIVNFWVKSQIGSLQTNGGKLMNSTSTYQYNSLTFGYMLSVNENNITEIGYKDSDGSGSGLLNYTPQLYIPAFKAYTPFFVPFASVENMDDKILAMKENATFESLSSETLPLSALIFNDFNVNNRSLDYTIQCEEQSRYSFYPYEAFVAFSMNTMTTTILNYFLGGNGTIYKSNIATLPYYQQSTTIDIASLLGGSFYPFALSFIMPLFIYSIVYEKQEKLRDLSLMMGLKIRNYWFMTYIFNFLIYFIIIVFVVGVSSIFGFAVFVKGSQFAMFLFLFAWGNSMITFSFFLSTFFKKTRAASIFGYFLVIIAVNLNSILSYQVFKDSTPPVPYYWIPLLAFYRGMSQLSTQCGIDLCPEWSAYTWEFEMSKIIFWLYIDAIVYLLIALYLDQVLPREFGVPSHPLFFLKPILNLFKNKDNDKSNTINGGSGGGRRFSETSSLINSADFDVENNNGEQEIVEDEDVLEEKEMIINRRYDPNEMTVIIEGLTKHYVGRPKPSVDNLYLSVRKGEVLGFLGANGAGKTTTISMLTGLYTPTSGTAHVAGLDIRYDMDNIHHVIGVAMQFDIFWEDLSCVETLLYFTRLKGVPPEREIQSVESILKEVNLFEVKERLVKELSGGMKRRLSFAVAMTGDSSIIFLDEPSTGISSELRRDLWRTINDLKKNRSIILTTHSMEEADVLSSRIAIISQGKLQCIGTQNHLKAKFGDGYSVRINVEEPYINTHNPTELITKFSPQAVLTESFDGSYNYRFPKNTVISDLYQYLVSHKYDHHLQEWSFSQTSLEDVFLKISANDDTIN.

The next 7 helical transmembrane spans lie at 33–53 (CVQISIPLILVIILVIVNFWV), 192–212 (AFVAFSMNTMTTTILNYFLGG), 235–255 (IASLLGGSFYPFALSFIMPLF), 292–312 (IYFIIIVFVVGVSSIFGFAVF), 318–338 (FAMFLFLFAWGNSMITFSFFL), 347–367 (AASIFGYFLVIIAVNLNSILS), and 417–437 (SKIIFWLYIDAIVYLLIALYL). The ABC transporter domain maps to 531 to 762 (VIIEGLTKHY…FGDGYSVRIN (232 aa)). 565–572 (GANGAGKT) provides a ligand contact to ATP.

It belongs to the ABC transporter superfamily. ABCA family.

The protein resides in the membrane. This chain is ABC transporter A family member 9 (abcA9), found in Dictyostelium discoideum (Social amoeba).